Here is a 391-residue protein sequence, read N- to C-terminus: Na(+)/H(+) antiporter NhaA (391 aa).

The next 11 membrane-spanning stretches (helical) occupy residues 14–34 (AGGI…NSPL), 59–79 (LIHW…GLEV), 95–115 (SLPT…YLIF), 124–144 (VGWA…MALL), 154–174 (VFLL…IAMF), 177–197 (TDLS…LVGL), 213–233 (LILW…GVII), 261–281 (FVIL…GMSL), 292–312 (IALG…FVAV), 331–351 (VAVM…LAFI), and 363–383 (LGIL…LSKV).

The protein belongs to the NhaA Na(+)/H(+) (TC 2.A.33) antiporter family.

The protein localises to the cell inner membrane. The enzyme catalyses Na(+)(in) + 2 H(+)(out) = Na(+)(out) + 2 H(+)(in). Functionally, na(+)/H(+) antiporter that extrudes sodium in exchange for external protons. In Shewanella loihica (strain ATCC BAA-1088 / PV-4), this protein is Na(+)/H(+) antiporter NhaA.